The primary structure comprises 390 residues: Endonuclease 8-like 1 (390 aa).

Catalysis depends on Pro2, which acts as the Schiff-base intermediate with DNA. The Proton donor role is filled by Glu3. Lys54 acts as the Proton donor; for beta-elimination activity in catalysis. Asn176 is a DNA binding site. Positions 278-390 (TIWFQGDPGP…SLEPEGTSAS (113 aa)) are disordered. The span at 291-301 (KGRKSRKKKSK) shows a compositional bias: basic residues. Positions 335–347 (TATQRPEGTSLQQ) are enriched in polar residues. DNA is bound at residue Arg339. Arg339 serves as the catalytic Proton donor; for delta-elimination activity.

Belongs to the FPG family. Ubiquitous.

The protein resides in the cytoplasm. It localises to the cytoskeleton. Its subcellular location is the microtubule organizing center. The protein localises to the centrosome. It is found in the nucleus. The protein resides in the chromosome. It catalyses the reaction 2'-deoxyribonucleotide-(2'-deoxyribose 5'-phosphate)-2'-deoxyribonucleotide-DNA = a 3'-end 2'-deoxyribonucleotide-(2,3-dehydro-2,3-deoxyribose 5'-phosphate)-DNA + a 5'-end 5'-phospho-2'-deoxyribonucleoside-DNA + H(+). Involved in base excision repair of DNA damaged by oxidation or by mutagenic agents. Acts as a DNA glycosylase that recognizes and removes damaged bases. Has a preference for oxidized pyrimidines, such as thymine glycol, formamidopyrimidine (Fapy) and 5-hydroxyuracil. Has marginal activity towards 8-oxoguanine. Has AP (apurinic/apyrimidinic) lyase activity and introduces nicks in the DNA strand. Cleaves the DNA backbone by beta-delta elimination to generate a single-strand break at the site of the removed base with both 3'- and 5'-phosphates. Has DNA glycosylase/lyase activity towards mismatched uracil and thymine, in particular in U:C and T:C mismatches. Specifically binds 5-hydroxymethylcytosine (5hmC), suggesting that it acts as a specific reader of 5hmC. The polypeptide is Endonuclease 8-like 1 (NEIL1) (Homo sapiens (Human)).